The sequence spans 257 residues: tRNA pseudouridine synthase A (257 aa).

The Nucleophile role is filled by Asp-52. Position 111 (Tyr-111) interacts with substrate.

This sequence belongs to the tRNA pseudouridine synthase TruA family. Homodimer.

The catalysed reaction is uridine(38/39/40) in tRNA = pseudouridine(38/39/40) in tRNA. In terms of biological role, formation of pseudouridine at positions 38, 39 and 40 in the anticodon stem and loop of transfer RNAs. In Dinoroseobacter shibae (strain DSM 16493 / NCIMB 14021 / DFL 12), this protein is tRNA pseudouridine synthase A.